Consider the following 1063-residue polypeptide: MSPGASRGPRGSQAPLIAPLCCAAAALGMLLWSPACQAFNLDVEKLTVYSGPKGSYFGYAVDFHIPDARTASVLVGAPKANTSQPDIVEGGAVYYCPWPAEGSAQCRQIPFDTTNNRKIRVNGTKEPIEFKSNQWFGATVKAHKGKVVACAPLYHWRTLKPTPEKDPVGTCYVAIQNFSAYAEFSPCRNSNADPEGQGYCQAGFSLDFYKNGDLIVGGPGSFYWQGQVITASVADIIANYSFKDILRKLAGEKQTEVAPASYDDSYLGYSVAAGEFTGDSQQELVAGIPRGAQNFGYVSIINSTDMTFIQNFTGEQMASYFGYTVVVSDVNSDGLDDVLVGAPLFMEREFESNPREVGQIYLYLQVSSLLFRDPQILTGTETFGRFGSAMAHLGDLNQDGYNDIAIGVPFAGKDQRGKVLIYNGNKDGLNTKPSQVLQGVWASHAVPSGFGFTLRGDSDIDKNDYPDLIVGAFGTGKVAVYRARPVVTVDAQLLLHPMIINLENKTCQVPDSMTSAACFSLRVCASVTGQSIANTIVLMAEVQLDSLKQKGAIKRTLFLDNHQAHRVFPLVIKRQKSHQCQDFIVYLRDETEFRDKLSPINISLNYSLDESTFKEGLEVKPILNYYRENIVSEQAHILVDCGEDNLCVPDLKLSARPDKHQVIIGDENHLMLIINARNEGEGAYEAELFVMIPEEADYVGIERNNKGFRPLSCEYKMENVTRMVVCDLGNPMVSGTNYSLGLRFAVPRLEKTNMSINFDLQIRSSNKDNPDSNFVSLQINITAVAQVEIRGVSHPPQIVLPIHNWEPEEEPHKEEEVGPLVEHIYELHNIGPSTISDTILEVGWPFSARDEFLLYIFHIQTLGPLQCQPNPNINPQDIKPAASPEDTPELSAFLRNSTIPHLVRKRDVHVVEFHRQSPAKILNCTNIECLQISCAVGRLEGGESAVLKVRSRLWAHTFLQRKNDPYALASLVSFEVKKMPYTDQPAKLPEGSIVIKTSVIWATPNVSFSIPLWVIILAILLGLLVLAILTLALWKCGFFDRARPPQEDMTDREQLTNDKTPEA.

Positions 1–38 (MSPGASRGPRGSQAPLIAPLCCAAAALGMLLWSPACQA) are cleaved as a signal peptide. Residues 39–1012 (FNLDVEKLTV…TPNVSFSIPL (974 aa)) lie on the Extracellular side of the membrane. FG-GAP repeat units follow at residues 44 to 105 (EKLT…GSAQ), 122 to 183 (NGTK…AYAE), 188 to 240 (RNSN…IANY), 253 to 306 (KQTE…STDM), 307 to 372 (TFIQ…LLFR), 373 to 431 (DPQI…GLNT), and 435 to 498 (QVLQ…LHPM). A glycan (N-linked (GlcNAc...) asparagine) is linked at Asn-81. Cys-96 and Cys-106 form a disulfide bridge. Asn-122 carries N-linked (GlcNAc...) asparagine glycosylation. Cys-150 and Cys-171 are joined by a disulfide. A glycan (N-linked (GlcNAc...) asparagine) is linked at Asn-177. Cys-187 and Cys-200 are joined by a disulfide. An N-linked (GlcNAc...) asparagine glycan is attached at Asn-239. 4 residues coordinate Ca(2+): Glu-275, Thr-277, Asp-279, and Glu-283. Residues Asn-302 and Asn-311 are each glycosylated (N-linked (GlcNAc...) asparagine). 10 residues coordinate Ca(2+): Asp-329, Asn-331, Asp-333, Leu-335, Asp-337, Asp-395, Asn-397, Asp-399, Tyr-401, and Asp-403. A Cell attachment site motif is present at residues 455–457 (RGD). Ca(2+) contacts are provided by Asp-459, Asp-461, Asn-463, Tyr-465, and Asp-467. N-linked (GlcNAc...) asparagine glycosylation is present at Asn-504. 2 disulfide bridges follow: Cys-507–Cys-518 and Cys-524–Cys-580. N-linked (GlcNAc...) asparagine glycosylation is found at Asn-601 and Asn-605. 2 disulfide bridges follow: Cys-641-Cys-647 and Cys-713-Cys-726. N-linked (GlcNAc...) asparagine glycosylation is found at Asn-719, Asn-737, Asn-753, Asn-780, Asn-896, and Asn-923. 2 cysteine pairs are disulfide-bonded: Cys-867–Cys-924 and Cys-929–Cys-934. Asn-1005 is a glycosylation site (N-linked (GlcNAc...) asparagine). A helical transmembrane segment spans residues 1013-1033 (WVIILAILLGLLVLAILTLAL). At 1034 to 1063 (WKCGFFDRARPPQEDMTDREQLTNDKTPEA) the chain is on the cytoplasmic side.

It belongs to the integrin alpha chain family. In terms of assembly, heterodimer of an alpha and a beta subunit. The alpha subunit is composed of a heavy and a light chain linked by a disulfide bond. Alpha-8 associates with beta-1. Expressed in mesenchymal cells, including alveolar myofibroblasts, kidney mesangial cells and hepatic stellar cells and vascular and visceral smooth muscle (at protein level).

It localises to the membrane. Its subcellular location is the cell membrane. Its function is as follows. Integrin alpha-8/beta-1 functions in the genesis of kidney and probably of other organs by regulating the recruitment of mesenchymal cells into epithelial structures. It recognizes the sequence R-G-D in a wide array of ligands including TNC, FN1, SPP1 TGFB1, TGFB3 and VTN. NPNT is probably its functional ligand in kidney genesis. Neuronal receptor for TNC it mediates cell-cell interactions and regulates neurite outgrowth of sensory and motor neurons. The polypeptide is Integrin alpha-8 (ITGA8) (Homo sapiens (Human)).